Reading from the N-terminus, the 186-residue chain is Glycerol-3-phosphate acyltransferase 1 (186 aa).

5 consecutive transmembrane segments (helical) span residues 9 to 29 (MQFL…AYIV), 58 to 78 (GYFV…VSIA), 85 to 105 (STFV…PVLF), 121 to 141 (IAFD…FYLI), and 161 to 181 (ILYS…VLIL).

This sequence belongs to the PlsY family. Probably interacts with PlsX.

Its subcellular location is the cell membrane. It catalyses the reaction an acyl phosphate + sn-glycerol 3-phosphate = a 1-acyl-sn-glycero-3-phosphate + phosphate. It participates in lipid metabolism; phospholipid metabolism. In terms of biological role, catalyzes the transfer of an acyl group from acyl-phosphate (acyl-PO(4)) to glycerol-3-phosphate (G3P) to form lysophosphatidic acid (LPA). This enzyme utilizes acyl-phosphate as fatty acyl donor, but not acyl-CoA or acyl-ACP. In Bacillus cereus (strain ZK / E33L), this protein is Glycerol-3-phosphate acyltransferase 1.